Here is a 430-residue protein sequence, read N- to C-terminus: Pyrokinin-1 receptor (430 aa).

Topologically, residues 1 to 16 (MSAGNMSHDLGPPRDP) are extracellular. Asn5 carries an N-linked (GlcNAc...) asparagine glycan. Residues 17–37 (LAIVIPVTVVYSLIFITGVVG) form a helical membrane-spanning segment. Over 38–53 (NISTCIVIKKNRSMHT) the chain is Cytoplasmic. A helical transmembrane segment spans residues 54–74 (ATNYYLFSLAISDFLLLLSGV). At 75 to 96 (PQEVSYIWSKYPYVFGEYICIG) the chain is on the extracellular side. Residues Cys94 and Cys171 are joined by a disulfide bond. Residues 97–117 (RGLLAETSANATVLTITAFTV) traverse the membrane as a helical segment. Over 118–140 (ERYIAICHPFLGQAMSKLSRAIR) the chain is Cytoplasmic. Residues 141-161 (IIVLVWIMAIVTAIPQAAQFG) form a helical membrane-spanning segment. Residues 162-185 (IEHYSGVEQCGIVRVIVKHSFQLS) lie on the Extracellular side of the membrane. Residues 186-206 (TFIFFLAPMSIILVLYLLIGV) form a helical membrane-spanning segment. The Cytoplasmic portion of the chain corresponds to 207–281 (HLYRSTLVEG…GRLNHYGTRR (75 aa)). A helical transmembrane segment spans residues 282 to 302 (VLRMLVAVVVCFFLCWAPFHA). The Extracellular portion of the chain corresponds to 303-321 (QRLIAIYAPARGAKLRDQH). A helical transmembrane segment spans residues 322 to 342 (EFVYTVMTYVSGVLYYLSTCI). At 343-430 (NPLLYNIMSH…QYAMIGVQVN (88 aa)) the chain is on the cytoplasmic side. Polar residues predominate over residues 388 to 397 (TNSSQTQRFS). The segment at 388–413 (TNSSQTQRFSIESAEQPKPSIMQNPT) is disordered.

It belongs to the G-protein coupled receptor 1 family.

Its subcellular location is the cell membrane. Receptor for the neuropeptide CAP-3/pyrokinin-1 (TGPSASSGLWFGPRL-amide). Also activated weakly by other neuropeptides terminating in the sequence PRL-amide including pyrokinin-2, Hug-gamma, and ecdysis-triggering-hormone-1. The activity of this receptor is mediated by G proteins which activate a phosphatidyl-inositol-calcium second messenger system. The chain is Pyrokinin-1 receptor from Drosophila melanogaster (Fruit fly).